Here is a 278-residue protein sequence, read N- to C-terminus: HTH-type transcriptional regulator ExsA (278 aa).

The region spanning 171 to 269 is the HTH araC/xylS-type domain; that stretch reads ERLQLFMEKH…GCTPSRSRQG (99 aa). 2 consecutive DNA-binding regions (H-T-H motif) follow at residues 188 to 209 and 236 to 259; these read SDFS…GSVY and IVDI…RRRF.

In terms of assembly, homodimer. Interacts with ExsD; this interaction inhibits ExsA activity.

Its activity is regulated as follows. In the absence of inducing signals such as low Ca(2+) or host cell contact, the T3SS/injectisome is expressed at a low basal level and exists in a quiescent state due to ExsA sequestration by ExsD in a 1:1 complex. Upon host cell contact, this interaction is disrupted by the anti-antiactivator protein ExsC leading to ExsA activation. In terms of biological role, transcriptional regulator that plays an essential role in the activation the type III secretion system (T3SS) operons. In addition, ExsA directly regulates the transcription of ImpA virulence factor that cooperatively inhibits the functions of host macrophages together with the T3SS. This is HTH-type transcriptional regulator ExsA (exsA) from Pseudomonas aeruginosa (strain ATCC 15692 / DSM 22644 / CIP 104116 / JCM 14847 / LMG 12228 / 1C / PRS 101 / PAO1).